Here is a 253-residue protein sequence, read N- to C-terminus: uncharacterized protein (253 aa).

10-34 contacts NADP(+); sequence LVTGASSGLGRGLALWLARRGVRVF. Serine 142 provides a ligand contact to substrate. Tyrosine 155 (proton acceptor) is an active-site residue.

It belongs to the short-chain dehydrogenases/reductases (SDR) family.

This is an uncharacterized protein from Myxococcus xanthus (strain DK1622).